Consider the following 61-residue polypeptide: Metallothionein-2E (61 aa).

Met1 carries the post-translational modification N-acetylmethionine. Residues 1–29 form a beta region; the sequence is MDPNCSCATRDSCACASSCKCKECKCTSC. 20 residues coordinate a divalent metal cation: Cys5, Cys7, Cys13, Cys15, Cys19, Cys21, Cys24, Cys26, Cys29, Cys33, Cys34, Cys36, Cys37, Cys41, Cys44, Cys48, Cys50, Cys57, Cys59, and Cys60. Positions 30 to 61 are alpha; the sequence is KKSCCSCCPAGCTKCAQGCICKGALDKCSCCA.

Belongs to the metallothionein superfamily. Type 1 family. Monomer.

Metallothioneins have a high content of cysteine residues that bind various heavy metals; these proteins are transcriptionally regulated by both heavy metals and glucocorticoids. This Oryctolagus cuniculus (Rabbit) protein is Metallothionein-2E.